The primary structure comprises 117 residues: UPF0342 protein lwe2240 (117 aa).

The protein belongs to the UPF0342 family.

The protein is UPF0342 protein lwe2240 of Listeria welshimeri serovar 6b (strain ATCC 35897 / DSM 20650 / CCUG 15529 / CIP 8149 / NCTC 11857 / SLCC 5334 / V8).